The sequence spans 910 residues: Valine--tRNA ligase (910 aa).

The 'HIGH' region signature appears at 46 to 56 (PNVTGSLHMGH). Residues 539 to 543 (KMSKS) carry the 'KMSKS' region motif. Position 542 (lysine 542) interacts with ATP. Residues 845–909 (DLDILRNKIQ…QMLQERLKML (65 aa)) are a coiled coil.

It belongs to the class-I aminoacyl-tRNA synthetase family. ValS type 1 subfamily. In terms of assembly, monomer.

It localises to the cytoplasm. It catalyses the reaction tRNA(Val) + L-valine + ATP = L-valyl-tRNA(Val) + AMP + diphosphate. In terms of biological role, catalyzes the attachment of valine to tRNA(Val). As ValRS can inadvertently accommodate and process structurally similar amino acids such as threonine, to avoid such errors, it has a 'posttransfer' editing activity that hydrolyzes mischarged Thr-tRNA(Val) in a tRNA-dependent manner. This Synechocystis sp. (strain ATCC 27184 / PCC 6803 / Kazusa) protein is Valine--tRNA ligase.